We begin with the raw amino-acid sequence, 235 residues long: Endonuclease V (235 aa).

Mg(2+) contacts are provided by Asp47 and Asp115.

This sequence belongs to the endonuclease V family. Mg(2+) is required as a cofactor.

Its subcellular location is the cytoplasm. It catalyses the reaction Endonucleolytic cleavage at apurinic or apyrimidinic sites to products with a 5'-phosphate.. Functionally, DNA repair enzyme involved in the repair of deaminated bases. Selectively cleaves double-stranded DNA at the second phosphodiester bond 3' to a deoxyinosine leaving behind the intact lesion on the nicked DNA. The polypeptide is Endonuclease V (Myxococcus xanthus (strain DK1622)).